Consider the following 307-residue polypeptide: Elongation factor Ts (307 aa).

The segment at 79 to 82 is involved in Mg(2+) ion dislocation from EF-Tu; the sequence is TDFV.

Belongs to the EF-Ts family.

The protein resides in the cytoplasm. In terms of biological role, associates with the EF-Tu.GDP complex and induces the exchange of GDP to GTP. It remains bound to the aminoacyl-tRNA.EF-Tu.GTP complex up to the GTP hydrolysis stage on the ribosome. This is Elongation factor Ts from Bartonella bacilliformis (strain ATCC 35685 / KC583 / Herrer 020/F12,63).